The sequence spans 226 residues: N-(5'-phosphoribosyl)anthranilate isomerase (226 aa).

It belongs to the TrpF family.

It carries out the reaction N-(5-phospho-beta-D-ribosyl)anthranilate = 1-(2-carboxyphenylamino)-1-deoxy-D-ribulose 5-phosphate. Its pathway is amino-acid biosynthesis; L-tryptophan biosynthesis; L-tryptophan from chorismate: step 3/5. The chain is N-(5'-phosphoribosyl)anthranilate isomerase (TRP1) from Candida albicans (strain SC5314 / ATCC MYA-2876) (Yeast).